The chain runs to 361 residues: Cyclin-Y-like protein 2 (361 aa).

One can recognise a Cyclin N-terminal domain in the interval 204–286; the sequence is MRLTAEFAIV…QFLKLINYNN (83 aa).

This sequence belongs to the cyclin family. Cyclin Y subfamily.

In Homo sapiens (Human), this protein is Cyclin-Y-like protein 2 (CCNYL2).